The primary structure comprises 68 residues: uncharacterized protein (68 aa).

The tract at residues 1-20 is disordered; sequence MYKQKKKNHPFQCKKKKKKK. A helical membrane pass occupies residues 27 to 44; the sequence is IKLLFNYFLFFNFIITTF.

The protein resides in the membrane. This is an uncharacterized protein from Dictyostelium discoideum (Social amoeba).